The following is a 541-amino-acid chain: MSAIYNLEPQPTASAIIHTTQGEIAVELFAKQTPLTCRNFLQLALDGYYDNTIFHRLIPGFIVQGGDPSGTGHGGESIYDNGALSGDLDPWPMDQRRGKNAGPHGVNFKDEFHSRLKFNRRGLLGMANEGAPDTNSSQFFFTLGKADELTGKNTMFGRVAGDTIYNLAKIGEAEVEEGGERPLYPIKITRIEILINPFDDMQKREKKPRPQQISRPTPAEKKQKKRKGGKQLLSFGDEVGDEDGEELPLPKKPKFDTRIVADLDQDDSSKQSASKKSSAKRDAKPVANDVPKREEKPEPKPVKESRRSPSPQPVAQKKEQPPKKHYSEHSSPEPEEPKKKSLLEKTNEEIAALKASMKRTIHSEPVKQEKKKSALEQLIPDTAIRGRKRRPGASSNPTREEQEALDLLKSFKAKIETAPPEKNAAQPAVNPDVEDGEQDGQADEEKVCDLHFIANCQSCKAWDKVEDNEDSGDEGWMSHKLSFAADKLGKDLSYRKKAEEELVVIDPLAKARTLKEEKKATRDAKTGGSSRAWDRGRRDRH.

In terms of domain architecture, PPIase cyclophilin-type spans 11–193; the sequence is PTASAIIHTT…YPIKITRIEI (183 aa). 2 disordered regions span residues 199–443 and 513–541; these read DDMQ…GQAD and TLKE…RDRH. 3 stretches are compositionally biased toward basic and acidic residues: residues 279–307, 316–348, and 361–374; these read AKRD…ESRR, QKKE…KTNE, and IHSE…KKSA. Residues 432 to 442 are compositionally biased toward acidic residues; that stretch reads DVEDGEQDGQA. 2 stretches are compositionally biased toward basic and acidic residues: residues 513 to 525 and 532 to 541; these read TLKE…RDAK and AWDRGRRDRH.

This sequence belongs to the cyclophilin-type PPIase family. CWC27 subfamily. Associated with the spliceosome.

Its subcellular location is the cytoplasm. It localises to the nucleus. It catalyses the reaction [protein]-peptidylproline (omega=180) = [protein]-peptidylproline (omega=0). In terms of biological role, PPIases accelerate the folding of proteins. It catalyzes the cis-trans isomerization of proline imidic peptide bonds in oligopeptides. Involved in pre-mRNA splicing. This Neurospora crassa (strain ATCC 24698 / 74-OR23-1A / CBS 708.71 / DSM 1257 / FGSC 987) protein is Peptidyl-prolyl isomerase cwc-27 (cwc-27).